Reading from the N-terminus, the 34-residue chain is Photosystem II reaction center protein M (34 aa).

The helical transmembrane segment at 5-25 (ILAFIAIVLFISVPTAFLLII) threads the bilayer.

The protein belongs to the PsbM family. PSII is composed of 1 copy each of membrane proteins PsbA, PsbB, PsbC, PsbD, PsbE, PsbF, PsbH, PsbI, PsbJ, PsbK, PsbL, PsbM, PsbT, PsbX, PsbY, PsbZ, Psb30/Ycf12, at least 3 peripheral proteins of the oxygen-evolving complex and a large number of cofactors. It forms dimeric complexes.

Its subcellular location is the plastid. The protein resides in the chloroplast thylakoid membrane. Functionally, one of the components of the core complex of photosystem II (PSII). PSII is a light-driven water:plastoquinone oxidoreductase that uses light energy to abstract electrons from H(2)O, generating O(2) and a proton gradient subsequently used for ATP formation. It consists of a core antenna complex that captures photons, and an electron transfer chain that converts photonic excitation into a charge separation. This subunit is found at the monomer-monomer interface. This chain is Photosystem II reaction center protein M, found in Cycas taitungensis (Prince sago).